Reading from the N-terminus, the 324-residue chain is Phospho-N-acetylmuramoyl-pentapeptide-transferase (324 aa).

The next 10 membrane-spanning stretches (helical) occupy residues 5 to 25, 52 to 72, 76 to 96, 117 to 137, 147 to 167, 176 to 196, 203 to 223, 227 to 247, 250 to 270, and 302 to 322; these read IIVI…PLFI, PTMG…WVTA, VLSA…VLGF, FIGQ…SGFS, WSFD…VGGS, LDGL…VLAW, VAVF…FNAH, VFMG…VAVL, LELL…SVII, and IVVT…YIEV.

It belongs to the glycosyltransferase 4 family. MraY subfamily. Mg(2+) serves as cofactor.

It localises to the cell membrane. It catalyses the reaction UDP-N-acetyl-alpha-D-muramoyl-L-alanyl-gamma-D-glutamyl-meso-2,6-diaminopimeloyl-D-alanyl-D-alanine + di-trans,octa-cis-undecaprenyl phosphate = di-trans,octa-cis-undecaprenyl diphospho-N-acetyl-alpha-D-muramoyl-L-alanyl-D-glutamyl-meso-2,6-diaminopimeloyl-D-alanyl-D-alanine + UMP. The protein operates within cell wall biogenesis; peptidoglycan biosynthesis. Catalyzes the initial step of the lipid cycle reactions in the biosynthesis of the cell wall peptidoglycan: transfers peptidoglycan precursor phospho-MurNAc-pentapeptide from UDP-MurNAc-pentapeptide onto the lipid carrier undecaprenyl phosphate, yielding undecaprenyl-pyrophosphoryl-MurNAc-pentapeptide, known as lipid I. The sequence is that of Phospho-N-acetylmuramoyl-pentapeptide-transferase from Geobacillus thermodenitrificans (strain NG80-2).